Here is a 303-residue protein sequence, read N- to C-terminus: Oxygen-dependent coproporphyrinogen-III oxidase (303 aa).

Ser93 contributes to the substrate binding site. A divalent metal cation is bound by residues His97 and His107. His107 (proton donor) is an active-site residue. 109 to 111 (NVR) contributes to the substrate binding site. Positions 146 and 176 each coordinate a divalent metal cation. The important for dimerization stretch occupies residues 241-276 (YVEFNLVYDRGTLFGLQSGGRTESILMSLPPQVRWG). A substrate-binding site is contributed by 259 to 261 (GGR).

Belongs to the aerobic coproporphyrinogen-III oxidase family. As to quaternary structure, homodimer. A divalent metal cation serves as cofactor.

It is found in the cytoplasm. It carries out the reaction coproporphyrinogen III + O2 + 2 H(+) = protoporphyrinogen IX + 2 CO2 + 2 H2O. Its pathway is porphyrin-containing compound metabolism; protoporphyrin-IX biosynthesis; protoporphyrinogen-IX from coproporphyrinogen-III (O2 route): step 1/1. Its function is as follows. Involved in the heme biosynthesis. Catalyzes the aerobic oxidative decarboxylation of propionate groups of rings A and B of coproporphyrinogen-III to yield the vinyl groups in protoporphyrinogen-IX. The polypeptide is Oxygen-dependent coproporphyrinogen-III oxidase (Pseudomonas putida (strain GB-1)).